An 892-amino-acid chain; its full sequence is Ice-binding protein 1 (892 aa).

A signal peptide spans 1–23 (MNHSIKKTYLVFTMLLGFILLAG). The N-palmitoyl cysteine moiety is linked to residue C24. C24 is lipidated: S-diacylglycerol cysteine. BIG2 domains follow at residues 43 to 111 (TSIA…ITAS), 134 to 205 (TALA…SLGS), 221 to 288 (SIAL…ITAD), 306 to 386 (TSIM…TVTV), 392 to 471 (TSIA…TNLT), 478 to 558 (NSIV…NLTV), and 565 to 638 (SIDV…QASL). The Ice-binding site motif (T-A/G-X-T/N) motif lies at 866-869 (TGAN).

It belongs to the ice-binding protein family.

The protein localises to the cell outer membrane. Ice-binding adhesion protein that adsorbs this bacterium onto ice to maintain a favorable position in its aquatic habitat. Inhibits growth of the ice crystals. Has high thermal hysteresis (TH) activity, which is the ability to lower the freezing point of an aqueous solution below its melting point. The TH activity of this protein is approximately 1.4 degrees Celsius at 25 uM and little below 2 degrees Celsius at 80 uM. This chain is Ice-binding protein 1, found in Shewanella frigidimarina (strain NCIMB 400).